A 196-amino-acid chain; its full sequence is MSSIKLIVGLANPGAEYAQTRHNAGAWYVDLLAERHNQSLKEESKFFGYTARLNLAGQDIRLLVPATFMNLSGKAVAAMASFYRILPEEILVAHDELDILPGMAKLKLGGGNGGHNGLKDIQNKLGNNPNFYRLRIGIGHPGDKSKVTGFVLGKPPASEQTLIDDAIDESIRCTEVLLNEGMTKAMNRLHAFKASA.

Tyrosine 17 is a binding site for tRNA. Histidine 22 functions as the Proton acceptor in the catalytic mechanism. Residues phenylalanine 68, asparagine 70, and asparagine 116 each contribute to the tRNA site.

The protein belongs to the PTH family. As to quaternary structure, monomer.

It localises to the cytoplasm. It carries out the reaction an N-acyl-L-alpha-aminoacyl-tRNA + H2O = an N-acyl-L-amino acid + a tRNA + H(+). Hydrolyzes ribosome-free peptidyl-tRNAs (with 1 or more amino acids incorporated), which drop off the ribosome during protein synthesis, or as a result of ribosome stalling. Its function is as follows. Catalyzes the release of premature peptidyl moieties from peptidyl-tRNA molecules trapped in stalled 50S ribosomal subunits, and thus maintains levels of free tRNAs and 50S ribosomes. The sequence is that of Peptidyl-tRNA hydrolase from Yersinia pestis bv. Antiqua (strain Antiqua).